The following is a 488-amino-acid chain: Protein nucleotidyltransferase YdiU (488 aa).

8 residues coordinate ATP: Gly91, Gly93, Arg94, Lys114, Asp126, Gly127, Arg177, and Arg184. Asp253 functions as the Proton acceptor in the catalytic mechanism. Mg(2+) is bound by residues Asn254 and Asp263. Asp263 contributes to the ATP binding site.

Belongs to the SELO family. It depends on Mg(2+) as a cofactor. Mn(2+) serves as cofactor.

The enzyme catalyses L-seryl-[protein] + ATP = 3-O-(5'-adenylyl)-L-seryl-[protein] + diphosphate. It catalyses the reaction L-threonyl-[protein] + ATP = 3-O-(5'-adenylyl)-L-threonyl-[protein] + diphosphate. It carries out the reaction L-tyrosyl-[protein] + ATP = O-(5'-adenylyl)-L-tyrosyl-[protein] + diphosphate. The catalysed reaction is L-histidyl-[protein] + UTP = N(tele)-(5'-uridylyl)-L-histidyl-[protein] + diphosphate. The enzyme catalyses L-seryl-[protein] + UTP = O-(5'-uridylyl)-L-seryl-[protein] + diphosphate. It catalyses the reaction L-tyrosyl-[protein] + UTP = O-(5'-uridylyl)-L-tyrosyl-[protein] + diphosphate. Functionally, nucleotidyltransferase involved in the post-translational modification of proteins. It can catalyze the addition of adenosine monophosphate (AMP) or uridine monophosphate (UMP) to a protein, resulting in modifications known as AMPylation and UMPylation. In Bacillus cereus (strain B4264), this protein is Protein nucleotidyltransferase YdiU.